We begin with the raw amino-acid sequence, 184 residues long: ATP-dependent protease subunit HslV (184 aa).

Thr-12 is a catalytic residue. Na(+) is bound by residues Ala-166, Cys-169, and Thr-172.

It belongs to the peptidase T1B family. HslV subfamily. As to quaternary structure, a double ring-shaped homohexamer of HslV is capped on each side by a ring-shaped HslU homohexamer. The assembly of the HslU/HslV complex is dependent on binding of ATP.

Its subcellular location is the cytoplasm. The catalysed reaction is ATP-dependent cleavage of peptide bonds with broad specificity.. Allosterically activated by HslU binding. Protease subunit of a proteasome-like degradation complex believed to be a general protein degrading machinery. The chain is ATP-dependent protease subunit HslV from Brucella anthropi (strain ATCC 49188 / DSM 6882 / CCUG 24695 / JCM 21032 / LMG 3331 / NBRC 15819 / NCTC 12168 / Alc 37) (Ochrobactrum anthropi).